A 146-amino-acid polypeptide reads, in one-letter code: MRVVLQRSKEASVTVDGEIVGQIPFGLTLLVGITHEDTEQDAAYIAEKIANLRIFEDENGKMNHSILDVKGQVLSISQFTLYGDCRKGRRPNFMNAAKPDYAERLYDFFNEEIRKQGLHVETGKFGAMMDVSLVNDGPVTLIVESK.

The Gly-cisPro motif, important for rejection of L-amino acids motif lies at 137 to 138; the sequence is GP.

Belongs to the DTD family. Homodimer.

Its subcellular location is the cytoplasm. It carries out the reaction glycyl-tRNA(Ala) + H2O = tRNA(Ala) + glycine + H(+). It catalyses the reaction a D-aminoacyl-tRNA + H2O = a tRNA + a D-alpha-amino acid + H(+). Functionally, an aminoacyl-tRNA editing enzyme that deacylates mischarged D-aminoacyl-tRNAs. Also deacylates mischarged glycyl-tRNA(Ala), protecting cells against glycine mischarging by AlaRS. Acts via tRNA-based rather than protein-based catalysis; rejects L-amino acids rather than detecting D-amino acids in the active site. By recycling D-aminoacyl-tRNA to D-amino acids and free tRNA molecules, this enzyme counteracts the toxicity associated with the formation of D-aminoacyl-tRNA entities in vivo and helps enforce protein L-homochirality. The polypeptide is D-aminoacyl-tRNA deacylase (Bacillus cytotoxicus (strain DSM 22905 / CIP 110041 / 391-98 / NVH 391-98)).